The sequence spans 201 residues: Ribosome maturation factor RimP (201 aa).

The protein belongs to the RimP family.

Its subcellular location is the cytoplasm. In terms of biological role, required for maturation of 30S ribosomal subunits. In Acidiphilium cryptum (strain JF-5), this protein is Ribosome maturation factor RimP.